Consider the following 430-residue polypeptide: Serine--tRNA ligase (430 aa).

237–239 (TAE) provides a ligand contact to L-serine. Residue 268–270 (RSE) participates in ATP binding. Glutamate 291 is an L-serine binding site. ATP is bound at residue 355–358 (EISS). An L-serine-binding site is contributed by serine 391.

This sequence belongs to the class-II aminoacyl-tRNA synthetase family. Type-1 seryl-tRNA synthetase subfamily. Homodimer. The tRNA molecule binds across the dimer.

It is found in the cytoplasm. The enzyme catalyses tRNA(Ser) + L-serine + ATP = L-seryl-tRNA(Ser) + AMP + diphosphate + H(+). It catalyses the reaction tRNA(Sec) + L-serine + ATP = L-seryl-tRNA(Sec) + AMP + diphosphate + H(+). It participates in aminoacyl-tRNA biosynthesis; selenocysteinyl-tRNA(Sec) biosynthesis; L-seryl-tRNA(Sec) from L-serine and tRNA(Sec): step 1/1. Functionally, catalyzes the attachment of serine to tRNA(Ser). Is also able to aminoacylate tRNA(Sec) with serine, to form the misacylated tRNA L-seryl-tRNA(Sec), which will be further converted into selenocysteinyl-tRNA(Sec). This is Serine--tRNA ligase from Shigella boydii serotype 18 (strain CDC 3083-94 / BS512).